A 146-amino-acid chain; its full sequence is Kappa-casein (146 aa).

Residues threonine 107 and threonine 112 are each glycosylated (O-linked (GalNAc...) threonine). Residue serine 125 is modified to Phosphoserine; alternate. Serine 125 is a glycosylation site (O-linked (GalNAc...) serine; alternate). Threonine 142 is a glycosylation site (O-linked (GalNAc...) threonine). Serine 143 is subject to Phosphoserine.

This sequence belongs to the kappa-casein family. As to expression, mammary gland specific. Secreted in milk.

The protein resides in the secreted. In terms of biological role, kappa-casein stabilizes micelle formation, preventing casein precipitation in milk. This chain is Kappa-casein (CSN3), found in Tapirus indicus (Asiatic tapir).